We begin with the raw amino-acid sequence, 370 residues long: Adaptive-response sensory kinase SasA (370 aa).

The region spanning 152–365 is the Histidine kinase domain; sequence MVAHELRTPL…CFYLTVPVWQ (214 aa). Residue histidine 155 is modified to Phosphohistidine; by autocatalysis.

As to quaternary structure, homooligomerizes. Interacts with KaiC. Participates in the KaiBC complex, whose core is composed of a KaiC homohexamer and 6 KaiB.

It carries out the reaction ATP + protein L-histidine = ADP + protein N-phospho-L-histidine.. In terms of biological role, member of the two-component regulatory system SasA/RpaA involved in genome-wide circadian gene expression. One of several clock output pathways. Participates in the Kai clock protein complex, the main circadian regulator in cyanobacteria, via its interaction with KaiC. KaiC enhances the autophosphorylation activity of SasA, which then transfers its phosphate group to RpaA to activate it. In addition to its output function, recruits fold-shifted KaiB (KaiB(fs)) to KaiC to cooperatively form the KaiB(6):KaiC(6) complex (independent of SasA kinase activity). Required for robustness of the circadian rhythm of gene expression and is involved in clock output, also required for adaptation to light/dark cycles. This chain is Adaptive-response sensory kinase SasA, found in Prochlorococcus marinus (strain MIT 9313).